We begin with the raw amino-acid sequence, 337 residues long: ERI1 exoribonuclease 3 (337 aa).

In terms of domain architecture, Exonuclease spans 146–320; the sequence is FLVLDFEATC…DDCKNIANIM (175 aa). Mg(2+)-binding residues include Asp-150, Glu-152, and Asp-249. The active-site Proton acceptor is the Glu-152. Glu-152 serves as a coordination point for AMP. Catalysis depends on His-307, which acts as the Proton acceptor. Position 307 (His-307) interacts with AMP. Asp-312 contacts Mg(2+).

In terms of assembly, interacts with PRNP. The cofactor is Mg(2+).

In Homo sapiens (Human), this protein is ERI1 exoribonuclease 3 (ERI3).